The following is a 2079-amino-acid chain: Protein xmas (2079 aa).

One can recognise an RRM domain in the interval 12 to 83 (KTLLCRNIPE…HLFDISYADN (72 aa)). A disordered region spans residues 112–152 (NEYGSGKPIKKPQNGSSGSGGSSMLPAIPVGPATAPVSRDR). Residues 342 to 525 (DSKINAENLT…ETEYKLPRQY (184 aa)) form the PCI domain. A sufficient for Orc3 binding region spans residues 835-1359 (PLSFGAENPE…RRDASDHKHA (525 aa)). Disordered stretches follow at residues 1335–1360 (RHTLRELNRSHKSRKRRDASDHKHAM), 1755–1778 (AEETEDQDTHHRHHGGGQKMSKRA), 1930–1963 (KAQAKPRSEPKSPSSATDYHRVASQKLPHVTSKA), and 2032–2079 (SAAA…TGKL). Positions 1764 to 1776 (HHRHHGGGQKMSK) are enriched in basic residues. Over residues 2048–2059 (PVVSPKVQVPSV) the composition is skewed to low complexity. Positions 2070–2079 (GPQTTKTGKL) are enriched in polar residues.

The protein belongs to the SAC3 family. In terms of assembly, component of the nuclear pore complex (NPC)-associated TREX-2/AMEX complex (anchoring and mRNA export complex), composed of e(y)2, xmas and PCID2. Within the TREX-2/ AMEX complex, interactions with e(y)2 is required for localization of e(y)2 to the nuclear periphery. Interaction between the TREX-2/AMEX complex and the ORC complex is required for ORC localization to mRNPs, and consequently mRNA export. Within the TREX-2/AMEX-ORC complex, interacts with Orc6, (via C-terminus) with Orc3, and weakly interacts with Orc4. However, another report found that the interaction with Orc3 is not direct, instead it is mediated via e(y)2. Interacts with piwi. In terms of tissue distribution, expressed in ovaries (at protein level). Detected in the testes and ovaries, with expression levels higher in oocytes than in testicular cells (at protein level). As to expression, detected in the testes and ovaries (at protein level). In terms of tissue distribution, detected in the testes.

It localises to the nucleus. The protein resides in the nucleoplasm. The protein localises to the nucleus membrane. It is found in the cytoplasm. Its function is as follows. Involved in mRNA export and mRNA coupled transcription activation. Component of the nuclear pore complex (NPC)-associated TREX-2/AMEX complex (anchoring and mRNA export complex) which functions in docking export-competent ribonucleoprotein particles (mRNPs) to the nuclear entrance of the nuclear pore complex (nuclear basket), thereby enabling the export of mRNAs to the cytoplasm through the nuclear pores. The TREX-2/AMEX complex also functions with the transcriptional coactivator SAGA/TFTC complex, to anchor a subset of transcription sites to the nuclear pore complex basket in order to achieve efficient transcription and export of their resulting mRNAs. Within the complex, required for localization of e(y)2 to the nuclear periphery. This Drosophila melanogaster (Fruit fly) protein is Protein xmas.